The sequence spans 459 residues: Putrescine aminotransferase (459 aa).

Pyridoxal 5'-phosphate-binding positions include 150–151 (GT) and Gln-274. Lys-300 is modified (N6-(pyridoxal phosphate)lysine). Thr-332 serves as a coordination point for pyridoxal 5'-phosphate.

Belongs to the class-III pyridoxal-phosphate-dependent aminotransferase family. Putrescine aminotransferase subfamily. Pyridoxal 5'-phosphate is required as a cofactor.

The catalysed reaction is an alkane-alpha,omega-diamine + 2-oxoglutarate = an omega-aminoaldehyde + L-glutamate. The enzyme catalyses putrescine + 2-oxoglutarate = 1-pyrroline + L-glutamate + H2O. It catalyses the reaction cadaverine + 2-oxoglutarate = 5-aminopentanal + L-glutamate. Its pathway is amine and polyamine degradation; putrescine degradation; 4-aminobutanal from putrescine (transaminase route): step 1/1. Catalyzes the aminotransferase reaction from putrescine to 2-oxoglutarate, leading to glutamate and 4-aminobutanal, which spontaneously cyclizes to form 1-pyrroline. This is the first step in one of two pathways for putrescine degradation, where putrescine is converted into 4-aminobutanoate (gamma-aminobutyrate or GABA) via 4-aminobutanal. Also functions as a cadaverine transaminase in a a L-lysine degradation pathway to succinate that proceeds via cadaverine, glutarate and L-2-hydroxyglutarate. The chain is Putrescine aminotransferase from Escherichia coli (strain ATCC 8739 / DSM 1576 / NBRC 3972 / NCIMB 8545 / WDCM 00012 / Crooks).